Here is a 262-residue protein sequence, read N- to C-terminus: Triosephosphate isomerase (262 aa).

9 to 11 contributes to the substrate binding site; sequence NWK. H99 acts as the Electrophile in catalysis. Residue E171 is the Proton acceptor of the active site. Residues G177 and S216 each coordinate substrate.

This sequence belongs to the triosephosphate isomerase family. As to quaternary structure, homodimer.

The protein resides in the cytoplasm. It carries out the reaction D-glyceraldehyde 3-phosphate = dihydroxyacetone phosphate. It functions in the pathway carbohydrate biosynthesis; gluconeogenesis. The protein operates within carbohydrate degradation; glycolysis; D-glyceraldehyde 3-phosphate from glycerone phosphate: step 1/1. Involved in the gluconeogenesis. Catalyzes stereospecifically the conversion of dihydroxyacetone phosphate (DHAP) to D-glyceraldehyde-3-phosphate (G3P). This Blochmanniella floridana protein is Triosephosphate isomerase.